Consider the following 26-residue polypeptide: DNA-binding transcriptional regulator NtrC (26 aa).

One can recognise a Response regulatory domain in the interval 4–26 (TILVADDDAAIRTVLNQALSRAG).

In terms of processing, phosphorylated and dephosphorylated by NtrB.

The protein resides in the cytoplasm. Functionally, member of the two-component regulatory system NtrB/NtrC, which controls expression of the nitrogen-regulated (ntr) genes in response to nitrogen limitation. Phosphorylated NtrC binds directly to DNA and stimulates the formation of open promoter-sigma54-RNA polymerase complexes. The chain is DNA-binding transcriptional regulator NtrC (ntrC) from Rhizobium leguminosarum bv. phaseoli.